A 105-amino-acid chain; its full sequence is Replication initiation control protein YabA (105 aa).

Zn(2+)-binding residues include His-79, Cys-81, Cys-95, and Cys-98.

Belongs to the YabA family. In terms of assembly, homotetramer. Interacts with both DnaA and DnaN, acting as a bridge between these two proteins. Requires Zn(2+) as cofactor.

It is found in the cytoplasm. The protein resides in the nucleoid. Functionally, involved in control of chromosome replication initiation. Inhibits the cooperative binding of DnaA to the oriC region, thus negatively regulating initiation of chromosome replication. Inhibits the ability of DnaA-ATP to form a helix on DNA; does not disassemble preformed DnaA-DNA helices. Decreases the residence time of DnaA on the chromosome at its binding sites (oriC, replication forks and promoter-binding sites). Tethers DnaA to the replication machinery via the DNA polymerase beta sliding clamp subunit (dnaN). Associates with oriC and other DnaA targets on the chromosome in a DnaA-dependent manner. The polypeptide is Replication initiation control protein YabA (Streptococcus suis (strain 98HAH33)).